The primary structure comprises 422 residues: UDP-N-acetylglucosamine 1-carboxyvinyltransferase (422 aa).

22–23 (KN) serves as a coordination point for phosphoenolpyruvate. R93 serves as a coordination point for UDP-N-acetyl-alpha-D-glucosamine. Residue C117 is the Proton donor of the active site. C117 is modified (2-(S-cysteinyl)pyruvic acid O-phosphothioketal). UDP-N-acetyl-alpha-D-glucosamine is bound by residues 122-126 (RPVDL), D308, and L330.

It belongs to the EPSP synthase family. MurA subfamily.

It localises to the cytoplasm. The enzyme catalyses phosphoenolpyruvate + UDP-N-acetyl-alpha-D-glucosamine = UDP-N-acetyl-3-O-(1-carboxyvinyl)-alpha-D-glucosamine + phosphate. Its pathway is cell wall biogenesis; peptidoglycan biosynthesis. In terms of biological role, cell wall formation. Adds enolpyruvyl to UDP-N-acetylglucosamine. This Helicobacter pylori (strain Shi470) protein is UDP-N-acetylglucosamine 1-carboxyvinyltransferase.